A 439-amino-acid chain; its full sequence is Enolase 1-1 (439 aa).

Residue threonine 85 is modified to Phosphothreonine. Substrate contacts are provided by histidine 159 and glutamate 168. Residue glutamate 211 is the Proton donor of the active site. Position 246 (aspartate 246) interacts with Mg(2+). 2 positions are modified to phosphoserine: serine 249 and serine 250. Tyrosine 253 is subject to Phosphotyrosine. Substrate is bound by residues glutamate 295 and aspartate 320. Mg(2+)-binding residues include glutamate 295 and aspartate 320. Lysine 345 (proton acceptor) is an active-site residue. Serine 351 bears the Phosphoserine mark. Threonine 353 bears the Phosphothreonine mark. A Phosphoserine modification is found at serine 355. Residues 372 to 375 (SHRS) and lysine 396 each bind substrate. A Phosphoserine modification is found at serine 421.

This sequence belongs to the enolase family. In terms of assembly, homodimer. Requires Mg(2+) as cofactor.

Its subcellular location is the cytoplasm. It catalyses the reaction (2R)-2-phosphoglycerate = phosphoenolpyruvate + H2O. The protein operates within carbohydrate degradation; glycolysis; pyruvate from D-glyceraldehyde 3-phosphate: step 4/5. The polypeptide is Enolase 1-1 (eno101) (Schizosaccharomyces pombe (strain 972 / ATCC 24843) (Fission yeast)).